Reading from the N-terminus, the 273-residue chain is Ribosomal RNA small subunit methyltransferase A (273 aa).

6 residues coordinate S-adenosyl-L-methionine: Asn18, Leu20, Gly45, Glu66, Asp91, and Asn113.

This sequence belongs to the class I-like SAM-binding methyltransferase superfamily. rRNA adenine N(6)-methyltransferase family. RsmA subfamily.

It localises to the cytoplasm. It carries out the reaction adenosine(1518)/adenosine(1519) in 16S rRNA + 4 S-adenosyl-L-methionine = N(6)-dimethyladenosine(1518)/N(6)-dimethyladenosine(1519) in 16S rRNA + 4 S-adenosyl-L-homocysteine + 4 H(+). In terms of biological role, specifically dimethylates two adjacent adenosines (A1518 and A1519) in the loop of a conserved hairpin near the 3'-end of 16S rRNA in the 30S particle. May play a critical role in biogenesis of 30S subunits. The sequence is that of Ribosomal RNA small subunit methyltransferase A from Citrobacter koseri (strain ATCC BAA-895 / CDC 4225-83 / SGSC4696).